We begin with the raw amino-acid sequence, 309 residues long: Glutaminase (309 aa).

Residues serine 65, asparagine 117, glutamate 162, asparagine 169, tyrosine 193, tyrosine 245, and valine 263 each coordinate substrate.

It belongs to the glutaminase family. As to quaternary structure, homotetramer.

The catalysed reaction is L-glutamine + H2O = L-glutamate + NH4(+). This is Glutaminase from Shouchella clausii (strain KSM-K16) (Alkalihalobacillus clausii).